The primary structure comprises 281 residues: MIRDTKQPIKVPAKPASRSGGKAKTVKPKTIKPKTSAKAAAAKPASAKGLKGVIAVAPPSFRRERALIKRGIWPIAGCDEAGRGPLAGPVVAAAVVLDPKRVPKGLDDSKRLSAEKREALFEEICATAQVSVVYASPERINRDNILRASLWALTRAVHALPDLPRHVFVDGRDRLATKCDCEAVIGGDGLIASIAAASIIAKVSRDRLMCKLAEQCPGYGFEQHKGYGVPEHLDALARLGPTVHHRRFFAPVAAAWQKIEGAPPPQIRDLFEADVTVEATA.

Residues 1–46 (MIRDTKQPIKVPAKPASRSGGKAKTVKPKTIKPKTSAKAAAAKPAS) are disordered. The segment covering 33–46 (PKTSAKAAAAKPAS) has biased composition (low complexity). The RNase H type-2 domain maps to 73-261 (WPIAGCDEAG…VAAAWQKIEG (189 aa)). The a divalent metal cation site is built by D79, E80, and D170.

It belongs to the RNase HII family. Mn(2+) serves as cofactor. Requires Mg(2+) as cofactor.

The protein localises to the cytoplasm. The catalysed reaction is Endonucleolytic cleavage to 5'-phosphomonoester.. In terms of biological role, endonuclease that specifically degrades the RNA of RNA-DNA hybrids. This Rhodopseudomonas palustris (strain TIE-1) protein is Ribonuclease HII.